The primary structure comprises 398 residues: Bifunctional enzyme IspD/IspF (398 aa).

Positions 1–234 are 2-C-methyl-D-erythritol 4-phosphate cytidylyltransferase; it reads MPNPPRTAAI…SRLTALLGDI (234 aa). The interval 235–398 is 2-C-methyl-D-erythritol 2,4-cyclodiphosphate synthase; it reads RTGTGYDVHA…LPWGAEGLAG (164 aa). A divalent metal cation is bound by residues D241 and H243. Residues 241-243 and 267-268 each bind 4-CDP-2-C-methyl-D-erythritol 2-phosphate; these read DVH and HS. H275 serves as a coordination point for a divalent metal cation. 4-CDP-2-C-methyl-D-erythritol 2-phosphate-binding positions include 289-291, 365-368, F372, and R375; these read DIG and TTSE.

In the N-terminal section; belongs to the IspD/TarI cytidylyltransferase family. IspD subfamily. It in the C-terminal section; belongs to the IspF family. A divalent metal cation serves as cofactor.

It carries out the reaction 2-C-methyl-D-erythritol 4-phosphate + CTP + H(+) = 4-CDP-2-C-methyl-D-erythritol + diphosphate. The enzyme catalyses 4-CDP-2-C-methyl-D-erythritol 2-phosphate = 2-C-methyl-D-erythritol 2,4-cyclic diphosphate + CMP. Its pathway is isoprenoid biosynthesis; isopentenyl diphosphate biosynthesis via DXP pathway; isopentenyl diphosphate from 1-deoxy-D-xylulose 5-phosphate: step 2/6. It functions in the pathway isoprenoid biosynthesis; isopentenyl diphosphate biosynthesis via DXP pathway; isopentenyl diphosphate from 1-deoxy-D-xylulose 5-phosphate: step 4/6. Functionally, bifunctional enzyme that catalyzes the formation of 4-diphosphocytidyl-2-C-methyl-D-erythritol from CTP and 2-C-methyl-D-erythritol 4-phosphate (MEP) (IspD), and catalyzes the conversion of 4-diphosphocytidyl-2-C-methyl-D-erythritol 2-phosphate (CDP-ME2P) to 2-C-methyl-D-erythritol 2,4-cyclodiphosphate (ME-CPP) with a corresponding release of cytidine 5-monophosphate (CMP) (IspF). The polypeptide is Bifunctional enzyme IspD/IspF (Rhodopseudomonas palustris (strain BisB5)).